Consider the following 383-residue polypeptide: Microtubule-associated protein tau (383 aa).

Basic and acidic residues predominate over residues M1 to E27. A disordered region spans residues M1–V198. At A2 the chain carries N-acetylalanine. A phosphotyrosine mark is found at Y18 and Y29. K44 participates in a covalent cross-link: Glycyl lysine isopeptide (Lys-Gly) (interchain with G-Cter in ubiquitin). T53 carries the post-translational modification Phosphothreonine. Positions K72–T91 are enriched in basic and acidic residues. At T95 the chain carries Phosphothreonine. R97 bears the Omega-N-methylarginine mark. K105 carries the N6,N6-dimethyllysine; alternate modification. K105 carries the N6-acetyllysine; alternate modification. 3 positions are modified to phosphothreonine: T111, T117, and T123. Residues K116–G128 are compositionally biased toward pro residues. 3 positions are modified to phosphoserine: S127, S133, and S137. A compositionally biased stretch (low complexity) spans E129–S156. Residue Y139 is modified to Phosphotyrosine. A phosphoserine mark is found at S140, S141, and S144. Phosphothreonine is present on residues T147 and T154. The residue at position 156 (S156) is a Phosphoserine. T159 is modified (phosphothreonine). K167 is subject to N6-acetyllysine. Residue T173 is modified to Phosphothreonine. Residues S177 and S179 each carry the phosphoserine modification. 4 Tau/MAP repeats span residues Q186–K216, V217–S247, V248–Q278, and V279–N310. Residue K196 forms a Glycyl lysine isopeptide (Lys-Gly) (interchain with G-Cter in ubiquitin) linkage. K201 is modified (N6-acetyllysine; alternate). K201 carries the post-translational modification N6-methyllysine; alternate. K201 is covalently cross-linked (Glycyl lysine isopeptide (Lys-Gly) (interchain with G-Cter in ubiquitin); alternate). S204 is modified (phosphoserine). A Glycyl lysine isopeptide (Lys-Gly) (interchain with G-Cter in ubiquitin) cross-link involves residue K209. Position 223 is an N6-acetyllysine; alternate (K223). K223 is covalently cross-linked (Glycyl lysine isopeptide (Lys-Gly) (interchain with G-Cter in ubiquitin); alternate). Residues S227 and S231 each carry the phosphoserine modification. At K232 the chain carries N6-acetyllysine. A disulfide bridge connects residues C233 and C264. A Phosphoserine modification is found at S235. Residue K240 is modified to N6-acetyllysine; alternate. K240 participates in a covalent cross-link: Glycyl lysine isopeptide (Lys-Gly) (interchain with G-Cter in ubiquitin); alternate. At S247 the chain carries Phosphoserine. The residue at position 253 (K253) is an N6,N6-dimethyllysine; alternate. 3 positions are modified to N6-acetyllysine; alternate: K253, K259, and K263. Residues K253, K259, and K263 each participate in a glycyl lysine isopeptide (Lys-Gly) (interchain with G-Cter in ubiquitin); alternate cross-link. The residue at position 266 (S266) is a Phosphoserine. An N6-acetyllysine; alternate mark is found at K273, K285, and K289. Glycyl lysine isopeptide (Lys-Gly) (interchain with G-Cter in ubiquitin); alternate cross-links involve residues K273, K285, and K289. Residue R291 is modified to Omega-N-methylarginine. Position 294 is a phosphoserine (S294). Residue K295 forms a Glycyl lysine isopeptide (Lys-Gly) (interchain with G-Cter in ubiquitin) linkage. S298 is modified (phosphoserine). N6-acetyllysine; alternate is present on K311. Residue K311 forms a Glycyl lysine isopeptide (Lys-Gly) (interchain with G-Cter in ubiquitin); alternate linkage. Residue K317 forms a Glycyl lysine isopeptide (Lys-Gly) (interchain with G-Cter in ubiquitin) linkage. K327 is modified (N6-acetyllysine; alternate). K327 is covalently cross-linked (Glycyl lysine isopeptide (Lys-Gly) (interchain with G-Cter in ubiquitin); alternate). Y336 carries the post-translational modification Phosphotyrosine. 2 positions are modified to phosphoserine: S338 and S342. The disordered stretch occupies residues V340–I359. Residues G343–S358 show a composition bias toward polar residues. The residue at position 345 (T345) is a Phosphothreonine. S346, S351, S358, and S364 each carry phosphoserine. A Phosphothreonine modification is found at T369.

Interacts with MARK1, MARK2, MARK3 and MARK4. Interacts with SQSTM1 when polyubiquitinated. Interacts with PSMC2 through SQSTM1. Interacts with FKBP4. Binds to CSNK1D. Interacts with SGK1. Interacts with PIN1. Interacts with LRRK2. Interacts with LRP1, leading to endocytosis; this interaction is reduced in the presence of LRPAP1/RAP. Post-translationally, polyubiquitinated. Requires functional TRAF6 and may provoke SQSTM1-dependent degradation by the proteasome. Phosphorylation at various serine and threonine residues in S-P or T-P motifs by proline-directed protein kinases (PDPK1, CDK1, CDK5, GSK3, MAPK) (a few sites per protein in interphase, more in mitosis), and at serine residues in K-X-G-S motifs by MAP/microtubule affinity-regulating kinase (MARK1, MARK2, MARK3 or MARK4), causing detachment from microtubules, and their disassembly. Phosphorylation at Ser-204 by BRSK1 and BRSK2 in neurons affects ability to bind microtubules and plays a role in neuron polarization. Phosphorylated by PHK. Dephosphorylation at several serine and threonine residues by the serine/threonine phosphatase PPP5C. Expressed in neurons.

The protein localises to the cytoplasm. The protein resides in the cytosol. Its subcellular location is the cell membrane. It localises to the cytoskeleton. It is found in the cell projection. The protein localises to the axon. The protein resides in the dendrite. Functionally, promotes microtubule assembly and stability, and might be involved in the establishment and maintenance of neuronal polarity. The C-terminus binds axonal microtubules while the N-terminus binds neural plasma membrane components, suggesting that tau functions as a linker protein between both. Axonal polarity is predetermined by tau localization (in the neuronal cell) in the domain of the cell body defined by the centrosome. This is Microtubule-associated protein tau (MAPT) from Papio hamadryas (Hamadryas baboon).